We begin with the raw amino-acid sequence, 413 residues long: Serine hydroxymethyltransferase (413 aa).

(6S)-5,6,7,8-tetrahydrofolate contacts are provided by residues L118 and 122–124; that span reads GHL. K228 bears the N6-(pyridoxal phosphate)lysine mark.

The protein belongs to the SHMT family. In terms of assembly, homodimer. Requires pyridoxal 5'-phosphate as cofactor.

It is found in the cytoplasm. The catalysed reaction is (6R)-5,10-methylene-5,6,7,8-tetrahydrofolate + glycine + H2O = (6S)-5,6,7,8-tetrahydrofolate + L-serine. It participates in one-carbon metabolism; tetrahydrofolate interconversion. It functions in the pathway amino-acid biosynthesis; glycine biosynthesis; glycine from L-serine: step 1/1. Functionally, catalyzes the reversible interconversion of serine and glycine with tetrahydrofolate (THF) serving as the one-carbon carrier. This reaction serves as the major source of one-carbon groups required for the biosynthesis of purines, thymidylate, methionine, and other important biomolecules. Also exhibits THF-independent aldolase activity toward beta-hydroxyamino acids, producing glycine and aldehydes, via a retro-aldol mechanism. The polypeptide is Serine hydroxymethyltransferase (Phytoplasma australiense).